The chain runs to 231 residues: (S)-2-haloacid dehalogenase 4A (231 aa).

Catalysis depends on aspartate 11, which acts as the Nucleophile. An (S)-2-haloacid-binding positions include 12-13 (AY), arginine 42, and 119-120 (SN). Residues 176-181 (SSNAWD) are important for catalytic activity.

The protein belongs to the HAD-like hydrolase superfamily. S-2-haloalkanoic acid dehalogenase family.

It carries out the reaction an (S)-2-haloacid + H2O = a (2R)-2-hydroxycarboxylate + a halide anion + H(+). The catalysed reaction is (S)-2-chloropropanoate + H2O = (R)-lactate + chloride + H(+). In terms of biological role, catalyzes the hydrolytic dehalogenation of small (S)-2-haloalkanoic acids to yield the corresponding (R)-2-hydroxyalkanoic acids. Acts on acids of short chain lengths, C(2) to C(4), with inversion of configuration at C-3. Active with 2-halogenated carboxylic acids and converts only the S-isomer (or L-isomer) of 2-chloropropionic acid with inversion of configuration to produce R-lactate (or D-isomer). The chain is (S)-2-haloacid dehalogenase 4A from Burkholderia cepacia (Pseudomonas cepacia).